The sequence spans 203 residues: Pyridoxine/pyridoxamine 5'-phosphate oxidase (203 aa).

Residues 51 to 56, 66 to 67, Arg-72, Lys-73, and Gln-95 contribute to the FMN site; these read RMVLLK and YT. Lys-56 serves as a coordination point for substrate. 3 residues coordinate substrate: Tyr-113, Arg-117, and Ser-121. FMN is bound by residues 130-131 and Trp-175; that span reads QS. Position 181 to 183 (181 to 183) interacts with substrate; the sequence is RLH. Arg-185 contributes to the FMN binding site.

The protein belongs to the pyridoxamine 5'-phosphate oxidase family. In terms of assembly, homodimer. FMN serves as cofactor.

The catalysed reaction is pyridoxamine 5'-phosphate + O2 + H2O = pyridoxal 5'-phosphate + H2O2 + NH4(+). It carries out the reaction pyridoxine 5'-phosphate + O2 = pyridoxal 5'-phosphate + H2O2. It functions in the pathway cofactor metabolism; pyridoxal 5'-phosphate salvage; pyridoxal 5'-phosphate from pyridoxamine 5'-phosphate: step 1/1. Its pathway is cofactor metabolism; pyridoxal 5'-phosphate salvage; pyridoxal 5'-phosphate from pyridoxine 5'-phosphate: step 1/1. Catalyzes the oxidation of either pyridoxine 5'-phosphate (PNP) or pyridoxamine 5'-phosphate (PMP) into pyridoxal 5'-phosphate (PLP). This Novosphingobium aromaticivorans (strain ATCC 700278 / DSM 12444 / CCUG 56034 / CIP 105152 / NBRC 16084 / F199) protein is Pyridoxine/pyridoxamine 5'-phosphate oxidase.